The sequence spans 327 residues: Aspartate--ammonia ligase (327 aa).

This sequence belongs to the class-II aminoacyl-tRNA synthetase family. AsnA subfamily.

It localises to the cytoplasm. The enzyme catalyses L-aspartate + NH4(+) + ATP = L-asparagine + AMP + diphosphate + H(+). It participates in amino-acid biosynthesis; L-asparagine biosynthesis; L-asparagine from L-aspartate (ammonia route): step 1/1. The sequence is that of Aspartate--ammonia ligase from Bacillus mycoides (strain KBAB4) (Bacillus weihenstephanensis).